We begin with the raw amino-acid sequence, 404 residues long: Acetate kinase (404 aa).

Residue Asn9 coordinates Mg(2+). Lys16 is a binding site for ATP. Arg100 lines the substrate pocket. Residue Asp157 is the Proton donor/acceptor of the active site. Residues 215–219, 290–292, and 335–339 contribute to the ATP site; these read HLGNG, DMR, and GIGEN. Glu386 provides a ligand contact to Mg(2+).

It belongs to the acetokinase family. In terms of assembly, homodimer. Mg(2+) serves as cofactor. It depends on Mn(2+) as a cofactor.

Its subcellular location is the cytoplasm. It catalyses the reaction acetate + ATP = acetyl phosphate + ADP. Its pathway is metabolic intermediate biosynthesis; acetyl-CoA biosynthesis; acetyl-CoA from acetate: step 1/2. Its function is as follows. Catalyzes the formation of acetyl phosphate from acetate and ATP. Can also catalyze the reverse reaction. This Methylocella silvestris (strain DSM 15510 / CIP 108128 / LMG 27833 / NCIMB 13906 / BL2) protein is Acetate kinase.